Here is a 571-residue protein sequence, read N- to C-terminus: Methionine--tRNA ligase (571 aa).

Positions 10-20 (PYVNAVPHLGN) match the 'HIGH' region motif. Positions 143, 146, 156, and 159 each coordinate Zn(2+). The 'KMSKS' region signature appears at 333 to 337 (KFSKS). An ATP-binding site is contributed by Lys-336.

Belongs to the class-I aminoacyl-tRNA synthetase family. MetG type 1 subfamily. The cofactor is Zn(2+).

It is found in the cytoplasm. It carries out the reaction tRNA(Met) + L-methionine + ATP = L-methionyl-tRNA(Met) + AMP + diphosphate. In terms of biological role, is required not only for elongation of protein synthesis but also for the initiation of all mRNA translation through initiator tRNA(fMet) aminoacylation. The protein is Methionine--tRNA ligase of Sulfolobus acidocaldarius (strain ATCC 33909 / DSM 639 / JCM 8929 / NBRC 15157 / NCIMB 11770).